The sequence spans 266 residues: Hydroxyethylthiazole kinase (266 aa).

Substrate is bound at residue M43. R119 and T166 together coordinate ATP. Substrate is bound at residue G193.

Belongs to the Thz kinase family. It depends on Mg(2+) as a cofactor.

It catalyses the reaction 5-(2-hydroxyethyl)-4-methylthiazole + ATP = 4-methyl-5-(2-phosphooxyethyl)-thiazole + ADP + H(+). It functions in the pathway cofactor biosynthesis; thiamine diphosphate biosynthesis; 4-methyl-5-(2-phosphoethyl)-thiazole from 5-(2-hydroxyethyl)-4-methylthiazole: step 1/1. Its function is as follows. Catalyzes the phosphorylation of the hydroxyl group of 4-methyl-5-beta-hydroxyethylthiazole (THZ). This Methanococcus vannielii (strain ATCC 35089 / DSM 1224 / JCM 13029 / OCM 148 / SB) protein is Hydroxyethylthiazole kinase.